The primary structure comprises 222 residues: Protein-L-isoaspartate O-methyltransferase (222 aa).

S67 is an active-site residue.

This sequence belongs to the methyltransferase superfamily. L-isoaspartyl/D-aspartyl protein methyltransferase family.

The protein resides in the cytoplasm. The enzyme catalyses [protein]-L-isoaspartate + S-adenosyl-L-methionine = [protein]-L-isoaspartate alpha-methyl ester + S-adenosyl-L-homocysteine. Catalyzes the methyl esterification of L-isoaspartyl residues in peptides and proteins that result from spontaneous decomposition of normal L-aspartyl and L-asparaginyl residues. It plays a role in the repair and/or degradation of damaged proteins. This chain is Protein-L-isoaspartate O-methyltransferase, found in Parvibaculum lavamentivorans (strain DS-1 / DSM 13023 / NCIMB 13966).